The chain runs to 614 residues: ATP-dependent rRNA helicase SPB4 (614 aa).

Positions 10–38 match the Q motif motif; it reads WSVLKCDLHPWIKEAIKSLGYPTMTPVQA. The Helicase ATP-binding domain occupies 41-233; it reads IPLFSGNKDV…RTGMANPVKI (193 aa). Residue 54–61 participates in ATP binding; the sequence is AVTGSGKT. The DEAD box signature appears at 181–184; that stretch reads DEAD. The 172-residue stretch at 260–431 folds into the Helicase C-terminal domain; it reads KISALIALIK…KFQKKFRKYM (172 aa). A coiled-coil region spans residues 510-581; that stretch reads EYADKQKEES…IEKQLMDDSS (72 aa). Basic and acidic residues predominate over residues 514 to 529; that stretch reads KQKEESRKKNLEEDKA. The segment at 514–614 is disordered; sequence KQKEESRKKN…DSMQGSFDDL (101 aa). The span at 530-541 shows a compositional bias: basic residues; it reads RKVHDAKKRKEL. Composition is skewed to basic and acidic residues over residues 551 to 563 and 584 to 595; these read KTDK…ERRE and EETKVDWKEMVK. Residues 604–614 show a composition bias toward polar residues; the sequence is SDSMQGSFDDL.

This sequence belongs to the DEAD box helicase family. DDX55/SPB4 subfamily. As to quaternary structure, component of pre-60S ribosomal complexes.

Its subcellular location is the nucleus. The protein localises to the nucleolus. The catalysed reaction is ATP + H2O = ADP + phosphate + H(+). ATP-binding RNA helicase involved in the biogenesis of 60S ribosomal subunits. Binds 90S pre-ribosomal particles and dissociates from pre-60S ribosomal particles after processing of 27SB pre-rRNA. Required for the normal formation of 18S rRNA through the processing of pre-rRNAs at sites A0, A1 and A2, and the normal formation of 25S and 5.8S rRNAs through the processing of pre-rRNAs at sites C1 and C2. This chain is ATP-dependent rRNA helicase SPB4, found in Debaryomyces hansenii (strain ATCC 36239 / CBS 767 / BCRC 21394 / JCM 1990 / NBRC 0083 / IGC 2968) (Yeast).